Reading from the N-terminus, the 162-residue chain is Putative 4-hydroxy-4-methyl-2-oxoglutarate aldolase (162 aa).

Substrate is bound by residues 75–78 (GDML) and R97. D98 contributes to the a divalent metal cation binding site.

Belongs to the class II aldolase/RraA-like family. As to quaternary structure, homotrimer. A divalent metal cation serves as cofactor.

It carries out the reaction 4-hydroxy-4-methyl-2-oxoglutarate = 2 pyruvate. The catalysed reaction is oxaloacetate + H(+) = pyruvate + CO2. Its function is as follows. Catalyzes the aldol cleavage of 4-hydroxy-4-methyl-2-oxoglutarate (HMG) into 2 molecules of pyruvate. Also contains a secondary oxaloacetate (OAA) decarboxylase activity due to the common pyruvate enolate transition state formed following C-C bond cleavage in the retro-aldol and decarboxylation reactions. The chain is Putative 4-hydroxy-4-methyl-2-oxoglutarate aldolase from Ectopseudomonas mendocina (strain ymp) (Pseudomonas mendocina).